The sequence spans 269 residues: Sulfur carrier protein FdhD (269 aa).

The active-site Cysteine persulfide intermediate is the cysteine 111.

This sequence belongs to the FdhD family.

It localises to the cytoplasm. In terms of biological role, required for formate dehydrogenase (FDH) activity. Acts as a sulfur carrier protein that transfers sulfur from IscS to the molybdenum cofactor prior to its insertion into FDH. The polypeptide is Sulfur carrier protein FdhD (Brucella melitensis biotype 1 (strain ATCC 23456 / CCUG 17765 / NCTC 10094 / 16M)).